The sequence spans 295 residues: Proline-rich protein 32 (295 aa).

Disordered stretches follow at residues 10 to 48 (GHAP…GHPG) and 101 to 120 (ATGE…SGQD).

This is Proline-rich protein 32 (PRR32) from Bos taurus (Bovine).